A 260-amino-acid chain; its full sequence is MASLEVSRSPRRSRRELEVRSPRQNKYSVLLPTYNERENLPLIVWLLVKSFSESGINYEIIIIDDGSPDGTRDVAEQLEKIYGSDRILLRPREKKLGLGTAYIHGMKHATGNYIIIMDADLSHHPKFIPEFIRKQKEGNFDIVSGTRYKGNGGVYGWDLKRKIISRGANFLTQILLRPGASDLTGSFRLYRKEVLEKLIEKCVSKGYVFQMEMIVRARQLNYTIGEVPISFVDRVYGESKLGGNEIVSFLKGLLTLFATT.

Residue Ala2 is modified to N-acetylalanine. Phosphoserine occurs at positions 3 and 9. Pro32, Tyr34, Glu36, Ile63, Asp65, Asp118, Ala119, Asp120, Arg147, Arg234, and Lys240 together coordinate GDP-alpha-D-mannose. Asp120 lines the Mg(2+) pocket. Asp120 provides a ligand contact to Mn(2+).

Belongs to the glycosyltransferase 2 family. In terms of assembly, component of the dolichol-phosphate mannose (DPM) synthase complex composed of DPM1, DPM2 and DPM3; within the complex, directly interacts with DPM3. This interaction stabilizes DPM1. Mg(2+) serves as cofactor. It depends on Mn(2+) as a cofactor. Requires Ca(2+) as cofactor.

It is found in the endoplasmic reticulum. It carries out the reaction a di-trans,poly-cis-dolichyl phosphate + GDP-alpha-D-mannose = a di-trans,poly-cis-dolichyl beta-D-mannosyl phosphate + GDP. It participates in protein modification; protein glycosylation. Functionally, transfers mannose from GDP-mannose to dolichol monophosphate to form dolichol phosphate mannose (Dol-P-Man) which is the mannosyl donor in pathways leading to N-glycosylation, glycosyl phosphatidylinositol membrane anchoring, and O-mannosylation of proteins; catalytic subunit of the dolichol-phosphate mannose (DPM) synthase complex. This chain is Dolichol-phosphate mannosyltransferase subunit 1 (DPM1), found in Homo sapiens (Human).